A 221-amino-acid polypeptide reads, in one-letter code: Serotriflin (221 aa).

One can recognise an SCP domain in the interval 19-147 (LDKHNALRRS…SYNYYYVCHY (129 aa)). N-linked (GlcNAc...) asparagine glycosylation is present at Asn-48. Intrachain disulfides connect Cys-56–Cys-134, Cys-73–Cys-148, Cys-129–Cys-145, Cys-167–Cys-174, Cys-170–Cys-179, Cys-183–Cys-216, Cys-192–Cys-210, and Cys-201–Cys-214. One can recognise a ShKT domain in the interval 183-216 (CKHVDRYSNCNSLVQQISCQSNNMNTDCPASCFC).

Forms a stable, non-covalent complex with SSP-2.

It localises to the secreted. This Protobothrops flavoviridis (Habu) protein is Serotriflin.